Consider the following 286-residue polypeptide: Diaminopimelate epimerase (286 aa).

The substrate site is built by Asn12 and Asn67. The Proton donor role is filled by Cys76. Substrate is bound by residues 77–78, Asn165, Asn198, and 216–217; these read GN and ER. The active-site Proton acceptor is Cys225. 226 to 227 contacts substrate; that stretch reads GT.

The protein belongs to the diaminopimelate epimerase family. As to quaternary structure, homodimer.

It is found in the cytoplasm. The catalysed reaction is (2S,6S)-2,6-diaminopimelate = meso-2,6-diaminopimelate. Its pathway is amino-acid biosynthesis; L-lysine biosynthesis via DAP pathway; DL-2,6-diaminopimelate from LL-2,6-diaminopimelate: step 1/1. Catalyzes the stereoinversion of LL-2,6-diaminopimelate (L,L-DAP) to meso-diaminopimelate (meso-DAP), a precursor of L-lysine. This is Diaminopimelate epimerase from Methanothermobacter thermautotrophicus (strain ATCC 29096 / DSM 1053 / JCM 10044 / NBRC 100330 / Delta H) (Methanobacterium thermoautotrophicum).